Consider the following 979-residue polypeptide: UPF0182 protein MT0070 (979 aa).

7 helical membrane-spanning segments follow: residues 19–41 (LVTAGMGMLALLLFGPRLVDIYV), 63–85 (LAIVAAVALVVAGIVLAALLLAY), 114–136 (LFGWGIAVTLGVVCGLIASFDWV), 174–196 (WLFVAVVLAFLASLLTHYLFGGL), 208–230 (AARVQLAVFAGAVVLLKAVAYWL), 261–280 (LVLVAIAVLCAVSFFTAIFL), and 285–307 (IPAMAAALLVLSAILVGGLWPLL). Residues 894–948 (VFGPGTGRVATXPGGDAASAPPPGAGGPAPPQGVPPPRTTQPPAAPPRGPDVPPA) form a disordered region. Positions 913–946 (APPPGAGGPAPPQGVPPPRTTQPPAAPPRGPDVP) are enriched in pro residues.

Belongs to the UPF0182 family.

The protein resides in the cell membrane. The polypeptide is UPF0182 protein MT0070 (Mycobacterium tuberculosis (strain CDC 1551 / Oshkosh)).